Consider the following 661-residue polypeptide: UvrABC system protein B (661 aa).

A Helicase ATP-binding domain is found at 31 to 186 (DNIEGGEKAQ…LLNALVDIQF (156 aa)). 44–51 (GATGTGKT) is a binding site for ATP. The short motif at 97–120 (YYDYYQPEAYVPSSDTYIEKDSSV) is the Beta-hairpin element. The Helicase C-terminal domain maps to 435-601 (QMDDLLGEIN…TIKKEIRDLI (167 aa)). In terms of domain architecture, UVR spans 626 to 661 (KAMIKKLEGQMQEAAEVLDFELAAQIRDMVIELKNM).

It belongs to the UvrB family. Forms a heterotetramer with UvrA during the search for lesions. Interacts with UvrC in an incision complex.

It localises to the cytoplasm. The UvrABC repair system catalyzes the recognition and processing of DNA lesions. A damage recognition complex composed of 2 UvrA and 2 UvrB subunits scans DNA for abnormalities. Upon binding of the UvrA(2)B(2) complex to a putative damaged site, the DNA wraps around one UvrB monomer. DNA wrap is dependent on ATP binding by UvrB and probably causes local melting of the DNA helix, facilitating insertion of UvrB beta-hairpin between the DNA strands. Then UvrB probes one DNA strand for the presence of a lesion. If a lesion is found the UvrA subunits dissociate and the UvrB-DNA preincision complex is formed. This complex is subsequently bound by UvrC and the second UvrB is released. If no lesion is found, the DNA wraps around the other UvrB subunit that will check the other stand for damage. This is UvrABC system protein B from Streptococcus suis (strain 98HAH33).